A 388-amino-acid chain; its full sequence is Galactokinase (388 aa).

32–35 serves as a coordination point for substrate; the sequence is EHTD. Residues serine 66 and 123-129 each bind ATP; that span reads GASLSSS. Positions 129 and 161 each coordinate Mg(2+). Aspartate 173 acts as the Proton acceptor in catalysis. Tyrosine 223 is a substrate binding site.

It belongs to the GHMP kinase family. GalK subfamily.

It localises to the cytoplasm. The catalysed reaction is alpha-D-galactose + ATP = alpha-D-galactose 1-phosphate + ADP + H(+). It participates in carbohydrate metabolism; galactose metabolism. Functionally, catalyzes the transfer of the gamma-phosphate of ATP to D-galactose to form alpha-D-galactose-1-phosphate (Gal-1-P). This chain is Galactokinase, found in Staphylococcus carnosus (strain TM300).